We begin with the raw amino-acid sequence, 514 residues long: 2,3-bisphosphoglycerate-independent phosphoglycerate mutase (514 aa).

Aspartate 14 and serine 64 together coordinate Mn(2+). Catalysis depends on serine 64, which acts as the Phosphoserine intermediate. Residues histidine 125, 155–156 (RD), arginine 187, arginine 193, 263–266 (RADR), and lysine 336 contribute to the substrate site. Mn(2+)-binding residues include aspartate 403, histidine 407, aspartate 444, histidine 445, and histidine 463.

This sequence belongs to the BPG-independent phosphoglycerate mutase family. In terms of assembly, monomer. It depends on Mn(2+) as a cofactor.

It carries out the reaction (2R)-2-phosphoglycerate = (2R)-3-phosphoglycerate. It participates in carbohydrate degradation; glycolysis; pyruvate from D-glyceraldehyde 3-phosphate: step 3/5. Catalyzes the interconversion of 2-phosphoglycerate and 3-phosphoglycerate. The chain is 2,3-bisphosphoglycerate-independent phosphoglycerate mutase from Salmonella typhi.